The following is a 208-amino-acid chain: Ribosomal RNA small subunit methyltransferase G (208 aa).

Residues glycine 78, phenylalanine 83, 101-103 (ERS), 129-130 (IE), and arginine 142 contribute to the S-adenosyl-L-methionine site.

Belongs to the methyltransferase superfamily. RNA methyltransferase RsmG family.

It localises to the cytoplasm. In terms of biological role, specifically methylates the N7 position of a guanine in 16S rRNA. The polypeptide is Ribosomal RNA small subunit methyltransferase G (Borreliella burgdorferi (strain ATCC 35210 / DSM 4680 / CIP 102532 / B31) (Borrelia burgdorferi)).